Reading from the N-terminus, the 981-residue chain is Anoctamin-3 (981 aa).

Positions 1–28 are enriched in polar residues; sequence MVHHSGSIQSFKQQKGMNISKSEITTEA. Disordered stretches follow at residues 1 to 32 and 67 to 87; these read MVHHSGSIQSFKQQKGMNISKSEITTEASLKP and PTSVTFLSADKPEHVTSEESR. At 1 to 403 the chain is on the cytoplasmic side; it reads MVHHSGSIQS…LYFAWLGWYT (403 aa). The segment covering 76-87 has biased composition (basic and acidic residues); sequence DKPEHVTSEESR. Residues 404 to 424 traverse the membrane as a helical segment; that stretch reads GMLIPAAVVGLCVFFYGLVTM. N-linked (GlcNAc...) asparagine glycans are attached at residues N425, N448, and N455. Over 425–469 the chain is Extracellular; the sequence is NESQVSQEICKATEVFMCPLCDKNCSLQRLNDSCIYAKVTYLFDN. Residues 470-490 form a helical membrane-spanning segment; that stretch reads GGTVFFAIFMAIWATVFLEFW. Over 491-550 the chain is Cytoplasmic; sequence KRRRSILTYTWDLIEWEEEEETLRPQFEAKYYRMEVINPITGKPEPHQPSSDKVTRLLVS. Residues 551-571 traverse the membrane as a helical segment; it reads VSGIFFMISLVITAVFAVVVY. Topologically, residues 572-592 are extracellular; it reads RLVVMEQFASFKWNFVKQHWQ. The helical transmembrane segment at 593–613 threads the bilayer; sequence FATSGAAVCINFIIIMLLNLA. The Cytoplasmic portion of the chain corresponds to 614 to 640; it reads YEKIAYLLTNLEYPRTESEWENSFALK. Residues 641–661 traverse the membrane as a helical segment; the sequence is MFLFQFVNLNSSIFYIAFFLG. Over 662 to 761 the chain is Extracellular; the sequence is RFVGHPGKYN…MDEYLEMVLQ (100 aa). The chain crosses the membrane as a helical span at residues 762-782; the sequence is FGFTTIFVAAFPLAPLLALLN. Residues 783–810 are Cytoplasmic-facing; it reads NIIEIRLDAYKFVTQWRRPLPARATDIG. A helical transmembrane segment spans residues 811–831; the sequence is IWLGILEGIGILAVITNAFVI. The Extracellular portion of the chain corresponds to 832-914; it reads AITSDYIPRF…QYWHILAARL (83 aa). N-linked (GlcNAc...) asparagine glycosylation is present at N866. The chain crosses the membrane as a helical span at residues 915-935; that stretch reads AFIIVFEHLVFGIKSFIAYLI. The Cytoplasmic portion of the chain corresponds to 936-981; sequence PDIPKGLRERIRREKYLVQEMMYEAELEHLQQQRRKSGQPIHHEWP.

Belongs to the anoctamin family. As to quaternary structure, interacts with KCNT1/Slack. In terms of tissue distribution, predominantly expressed in neuronal tissues. Expressed in brain.

The protein resides in the cell membrane. It carries out the reaction a 1,2-diacyl-sn-glycero-3-phosphocholine(in) = a 1,2-diacyl-sn-glycero-3-phosphocholine(out). It catalyses the reaction a beta-D-galactosyl-(1&lt;-&gt;1')-N-acylsphing-4-enine(out) = a beta-D-galactosyl-(1&lt;-&gt;1')-N-acylsphing-4-enine(in). Has calcium-dependent phospholipid scramblase activity; scrambles phosphatidylcholine and galactosylceramide. Does not exhibit calcium-activated chloride channel (CaCC) activity. Seems to act as potassium channel regulator and may inhibit pain signaling; can facilitate KCNT1/Slack channel activity by promoting its full single-channel conductance at very low sodium concentrations and by increasing its sodium sensitivity. This chain is Anoctamin-3, found in Mus musculus (Mouse).